Consider the following 412-residue polypeptide: Inactive serine protease 35 (412 aa).

A signal peptide spans 1 to 23 (MGAMFFGLMLFTLGWTLIDGSES). N-linked (GlcNAc...) asparagine glycosylation occurs at asparagine 110. The region spanning 124-407 (VYGTDSRFSI…ICLWMHGDDA (284 aa)) is the Peptidase S1 domain. Cysteine 154 and cysteine 170 are joined by a disulfide. Residues 192–207 (RNKGGGKRRRGSRRNR) are compositionally biased toward basic residues. The tract at residues 192-246 (RNKGGGKRRRGSRRNRREVSGAGREGSQDSLKETAKAGRRRKGSARRQRAADGRP) is disordered. The span at 217 to 227 (GSQDSLKETAK) shows a compositional bias: basic and acidic residues. Basic residues predominate over residues 228 to 239 (AGRRRKGSARRQ).

The protein belongs to the peptidase S1 family.

It is found in the secreted. The chain is Inactive serine protease 35 (PRSS35) from Bos taurus (Bovine).